A 100-amino-acid polypeptide reads, in one-letter code: Urease subunit gamma (100 aa).

The protein belongs to the urease gamma subunit family. Heterotrimer of UreA (gamma), UreB (beta) and UreC (alpha) subunits. Three heterotrimers associate to form the active enzyme.

It localises to the cytoplasm. The catalysed reaction is urea + 2 H2O + H(+) = hydrogencarbonate + 2 NH4(+). The protein operates within nitrogen metabolism; urea degradation; CO(2) and NH(3) from urea (urease route): step 1/1. This Mycobacteroides abscessus (strain ATCC 19977 / DSM 44196 / CCUG 20993 / CIP 104536 / JCM 13569 / NCTC 13031 / TMC 1543 / L948) (Mycobacterium abscessus) protein is Urease subunit gamma.